The chain runs to 227 residues: Isopentenyl-diphosphate Delta-isomerase 1 (227 aa).

K36 provides a ligand contact to substrate. Residues H40 and H51 each coordinate Mg(2+). A Nudix hydrolase domain is found at 49–199 (LLHRAFSVFL…EIKLTPWFKI (151 aa)). R70 and K74 together coordinate substrate. C86 is a catalytic residue. Position 87 (S87) interacts with substrate. Mg(2+)-binding residues include E146 and E148. E148 is an active-site residue. Residue K176 is modified to N6-acetyllysine. The short motif at 225–227 (HRL) is the Microbody targeting signal element.

It belongs to the IPP isomerase type 1 family. Monomer. It depends on Mg(2+) as a cofactor.

Its subcellular location is the peroxisome. It carries out the reaction isopentenyl diphosphate = dimethylallyl diphosphate. It participates in isoprenoid biosynthesis; dimethylallyl diphosphate biosynthesis; dimethylallyl diphosphate from isopentenyl diphosphate: step 1/1. Catalyzes the 1,3-allylic rearrangement of the homoallylic substrate isopentenyl (IPP) to its highly electrophilic allylic isomer, dimethylallyl diphosphate (DMAPP). The polypeptide is Isopentenyl-diphosphate Delta-isomerase 1 (Idi1) (Mus musculus (Mouse)).